We begin with the raw amino-acid sequence, 271 residues long: Neurexophilin-1 (271 aa).

Residues 1 to 21 (MQAACWYVLLLLQPTVYLVTC) form the signal peptide. The tract at residues 22–97 (ANLTNGGKSE…WDWLRNSTDL (76 aa)) is II. N-linked (GlcNAc...) asparagine glycans are attached at residues Asn-23, Asn-68, Asn-93, Asn-146, Asn-156, and Asn-162. An III region spans residues 98 to 176 (QEPRPRAKRR…LVPPTKIVEF (79 aa)). The interval 177–185 (DLAQQTVID) is IV (linker domain). The v (Cys-rich) stretch occupies residues 186–271 (AKDSKSFNCR…HSDTPYFPSG (86 aa)).

The protein belongs to the neurexophilin family. May be proteolytically processed at the boundary between the N-terminal non-conserved and the central conserved domain in neuron-like cells. As to expression, brain, only in a scattered subpopulation of neurons that probably represent inhibitory interneurons.

Its subcellular location is the secreted. In terms of biological role, may be signaling molecules that resemble neuropeptides. Ligand for alpha-neurexins. The protein is Neurexophilin-1 (Nxph1) of Mus musculus (Mouse).